Here is a 201-residue protein sequence, read N- to C-terminus: Recombination protein RecR (201 aa).

The C4-type zinc finger occupies 60–75 (CHECGNVDTSDPCTIC). The 96-residue stretch at 83-178 (SILVVVEDVS…KVTKLAHGVP (96 aa)) folds into the Toprim domain.

This sequence belongs to the RecR family.

May play a role in DNA repair. It seems to be involved in an RecBC-independent recombinational process of DNA repair. It may act with RecF and RecO. This Methylobacterium nodulans (strain LMG 21967 / CNCM I-2342 / ORS 2060) protein is Recombination protein RecR.